An 837-amino-acid chain; its full sequence is Exonuclease 1 (837 aa).

The N-domain stretch occupies residues 1–99; that stretch reads MGIQGLLQFI…RSRRERRQSN (99 aa). Residues aspartate 30, aspartate 78, glutamate 150, aspartate 152, aspartate 171, aspartate 173, and aspartate 225 each contribute to the Mg(2+) site. The interval 129 to 386 is interaction with MSH3; sequence MAHKVIKAAR…RLEVNSVSHA (258 aa). Residues 138–229 are I-domain; it reads RALGVDCLVA…ILSGCDYLAS (92 aa). Disordered regions lie at residues 345–367 and 440–477; these read TMPAHSRSHSWNEKAGQKPPGTN and IKENGCGDGTSPNSSKMSKSCPDSGTAHKTDAHTPSKM. The tract at residues 387–488 is interaction with MLH1; the sequence is PQLKEKPSTL…NKFATFLQRR (102 aa). Over residues 449–462 the composition is skewed to polar residues; that stretch reads TSPNSSKMSKSCPD. Lysine 480 carries the post-translational modification N6-acetyllysine. The segment at 555-589 is disordered; the sequence is NGTHNLSSQIPGNAAVSPEDEAQSSETSKLLGAMS. Over residues 556–565 the composition is skewed to polar residues; it reads GTHNLSSQIP. Phosphoserine is present on residues serine 589 and serine 601. Residues 591–837 are interaction with MSH2; the sequence is PSLGTLRSCF…CVRAQRAIFH (247 aa). The segment at 608–740 is disordered; sequence EFSRTPSPSA…GLCRSSSMDS (133 aa). Composition is skewed to polar residues over residues 611-623, 665-690, and 699-713; these read RTPSPSASTTLQQ, SSRSQESMDSSCGLNTSSLSQPSSRD, and NNKSLDNQGEQNSKQ. Threonine 612 is subject to Phosphothreonine. Residues serine 614 and serine 666 each carry the phosphoserine modification. Serine 737 is modified (phosphoserine). The tract at residues 778-837 is interaction with MLH1; it reads LQTKISELWKNFGFKKDSEKLPSCKKPLSPVKDNIQLTPETEDEIFNKPECVRAQRAIFH.

It belongs to the XPG/RAD2 endonuclease family. EXO1 subfamily. As to quaternary structure, interacts with the MLH1-PMS2 heterodimer via MLH1. Interacts with MSH3. Interacts with the MSH2-MSH6 heterodimer via MSH2, and this interaction may increase the processivity of the 5'-&gt;3' exonuclease activity. Interacts with PCNA, and this interaction may both stimulate the cryptic 3'-&gt;5' exonuclease activity and suppress the 5'-&gt;3' exonuclease activity. Interacts with WRN, and this interaction stimulates both the 5'-&gt;3' exonuclease activity and cleavage of 5'-overhanging flap structures. Interacts with RECQL/RECQ1, and this interaction stimulates cleavage of 5'-overhanging flap structures. Interacts with DNA helicase ZGRF1; the interaction is increased following DNA damage induction. Mg(2+) is required as a cofactor. In terms of processing, phosphorylated upon DNA damage and in response to agents stalling DNA replication, probably by ATM or ATR. In terms of tissue distribution, highly expressed in the spleen and testis. Also expressed in the bone marrow, brain, lung, lymph node and thymus.

It is found in the nucleus. Functionally, 5'-&gt;3' double-stranded DNA exonuclease which may also possess a cryptic 3'-&gt;5' double-stranded DNA exonuclease activity. Functions in DNA mismatch repair (MMR) to excise mismatch-containing DNA tracts directed by strand breaks located either 5' or 3' to the mismatch. Also exhibits endonuclease activity against 5'-overhanging flap structures similar to those generated by displacement synthesis when DNA polymerase encounters the 5'-end of a downstream Okazaki fragment. Required for somatic hypermutation (SHM) and class switch recombination (CSR) of immunoglobulin genes. Essential for male and female meiosis. The chain is Exonuclease 1 (Exo1) from Mus musculus (Mouse).